A 112-amino-acid chain; its full sequence is SPbeta prophage-derived uncharacterized protein YoqB (112 aa).

The polypeptide is SPbeta prophage-derived uncharacterized protein YoqB (yoqB) (Bacillus subtilis (strain 168)).